Here is a 512-residue protein sequence, read N- to C-terminus: Cytochrome P450 26B1 (512 aa).

Cys-441 provides a ligand contact to heme.

The protein belongs to the cytochrome P450 family. Requires heme as cofactor.

The protein resides in the endoplasmic reticulum membrane. It localises to the microsome membrane. It carries out the reaction all-trans-retinoate + reduced [NADPH--hemoprotein reductase] + O2 = all-trans-4-hydroxyretinoate + oxidized [NADPH--hemoprotein reductase] + H2O + H(+). It catalyses the reaction all-trans-retinoate + reduced [NADPH--hemoprotein reductase] + O2 = all-trans-18-hydroxyretinoate + oxidized [NADPH--hemoprotein reductase] + H2O + H(+). A cytochrome P450 monooxygenase involved in the metabolism of retinoates (RAs), the active metabolites of vitamin A, and critical signaling molecules in animals. RAs exist as at least four different isomers: all-trans-RA (atRA), 9-cis-RA, 13-cis-RA, and 9,13-dicis-RA, where atRA is considered to be the biologically active isomer, although 9-cis-RA and 13-cis-RA also have activity. Catalyzes the hydroxylation of atRA primarily at C-4 and C-18, thereby contributing to the regulation of atRA homeostasis and signaling. Hydroxylation of atRA limits its biological activity and initiates a degradative process leading to its eventual elimination. Involved in the convertion of atRA to all-trans-4-oxo-RA. Can oxidize all-trans-13,14-dihydroretinoate (DRA) to metabolites which could include all-trans-4-oxo-DRA, all-trans-4-hydroxy-DRA, all-trans-5,8-epoxy-DRA, and all-trans-18-hydroxy-DRA. Shows preference for the following substrates: atRA &gt; 9-cis-RA &gt; 13-cis-RA. Plays a central role in germ cell development: acts by degrading RAs in the developing testis, preventing STRA8 expression, thereby leading to delay of meiosis. Required for the maintenance of the undifferentiated state of male germ cells during embryonic development in Sertoli cells, inducing arrest in G0 phase of the cell cycle and preventing meiotic entry. Plays a role in skeletal development, both at the level of patterning and in the ossification of bone and the establishment of some synovial joints. Essential for postnatal survival. Functionally, also has a significant activity in oxidation of tazarotenic acid and may therefore metabolize that xenobiotic in vivo. The chain is Cytochrome P450 26B1 (CYP26B1) from Bos taurus (Bovine).